Here is an 882-residue protein sequence, read N- to C-terminus: Chondroitin sulfate synthase 3 (882 aa).

Topologically, residues 1–7 (MAVRSRR) are cytoplasmic. The helical; Signal-anchor for type II membrane protein transmembrane segment at 8 to 28 (PWMSVALGLVLGFTAASWLIA) threads the bilayer. Over 29-882 (PRVAELSERK…LGVRYNRTLS (854 aa)) the chain is Lumenal. Positions 46–167 (SYYGRSAAGP…GDGGAAAPSA (122 aa)) are disordered. Composition is skewed to low complexity over residues 59–69 (AQQPLPQPQSR) and 120–131 (GATGLPGAPAAE). Residues asparagine 155, asparagine 279, and asparagine 710 are each glycosylated (N-linked (GlcNAc...) asparagine). A divalent metal cation is bound by residues aspartate 720 and histidine 834. Asparagine 878 carries N-linked (GlcNAc...) asparagine glycosylation.

The protein belongs to the chondroitin N-acetylgalactosaminyltransferase family. The cofactor is Co(2+). Requires Mn(2+) as cofactor. It depends on Cd(2+) as a cofactor. In terms of tissue distribution, detected at low levels in brain, cerebral cortex, uterus and small intestine.

The protein localises to the golgi apparatus. Its subcellular location is the golgi stack membrane. The catalysed reaction is 3-O-(beta-D-GlcA-(1-&gt;3)-beta-D-GalNAc-(1-&gt;4)-beta-D-GlcA-(1-&gt;3)-beta-D-Gal-(1-&gt;3)-beta-D-Gal-(1-&gt;4)-beta-D-Xyl)-L-seryl-[protein] + UDP-N-acetyl-alpha-D-galactosamine = 3-O-(beta-D-GalNAc-(1-&gt;4)-beta-D-GlcA-(1-&gt;3)-beta-D-GalNAc-(1-&gt;4)-beta-D-GlcA-(1-&gt;3)-beta-D-Gal-(1-&gt;3)-beta-D-Gal-(1-&gt;4)-beta-D-Xyl)-L-seryl-[protein] + UDP + H(+). The enzyme catalyses 3-O-{beta-D-GlcA-(1-&gt;3)-[beta-D-GalNAc-(1-&gt;4)-beta-D-GlcA-(1-&gt;3)](n)-beta-D-GalNAc-(1-&gt;4)-beta-D-GlcA-(1-&gt;3)-beta-D-Gal-(1-&gt;3)-beta-D-Gal-(1-&gt;4)-beta-D-Xyl}-L-seryl-[protein] + UDP-N-acetyl-alpha-D-galactosamine = 3-O-{[beta-D-GalNAc-(1-&gt;4)-beta-D-GlcA-(1-&gt;3)](n+1)-beta-D-GalNAc-(1-&gt;4)-beta-D-GlcA-(1-&gt;3)-beta-D-Gal-(1-&gt;3)-beta-D-Gal-(1-&gt;4)-beta-D-Xyl}-L-seryl-[protein] + UDP + H(+). It catalyses the reaction 3-O-(beta-D-GalNAc-(1-&gt;4)-beta-D-GlcA-(1-&gt;3)-beta-D-Gal-(1-&gt;3)-beta-D-Gal-(1-&gt;4)-beta-D-Xyl)-L-seryl-[protein] + UDP-alpha-D-glucuronate = 3-O-(beta-D-GlcA-(1-&gt;3)-beta-D-GalNAc-(1-&gt;4)-beta-D-GlcA-(1-&gt;3)-beta-D-Gal-(1-&gt;3)-beta-D-Gal-(1-&gt;4)-beta-D-Xyl)-L-seryl-[protein] + UDP + H(+). It carries out the reaction 3-O-{[beta-D-GalNAc-(1-&gt;4)-beta-D-GlcA-(1-&gt;3)](n)-beta-D-GalNAc-(1-&gt;4)-beta-D-GlcA-(1-&gt;3)-beta-D-Gal-(1-&gt;3)-beta-D-Gal-(1-&gt;4)-beta-D-Xyl}-L-seryl-[protein] + UDP-alpha-D-glucuronate = 3-O-{beta-D-GlcA-(1-&gt;3)-[beta-D-GalNAc-(1-&gt;4)-beta-D-GlcA-(1-&gt;3)](n)-beta-D-GalNAc-(1-&gt;4)-beta-D-GlcA-(1-&gt;3)-beta-D-Gal-(1-&gt;3)-beta-D-Gal-(1-&gt;4)-beta-D-Xyl}-L-seryl-[protein] + UDP + H(+). In terms of biological role, has both beta-1,3-glucuronic acid and beta-1,4-N-acetylgalactosamine transferase activity. Transfers glucuronic acid (GlcUA) from UDP-GlcUA and N-acetylgalactosamine (GalNAc) from UDP-GalNAc to the non-reducing end of the elongating chondroitin polymer. Specific activity is much reduced compared to CHSY1. The polypeptide is Chondroitin sulfate synthase 3 (CHSY3) (Homo sapiens (Human)).